Here is a 315-residue protein sequence, read N- to C-terminus: Transaldolase (315 aa).

Lysine 125 functions as the Schiff-base intermediate with substrate in the catalytic mechanism.

It belongs to the transaldolase family. Type 1 subfamily. Homodimer.

It localises to the cytoplasm. The catalysed reaction is D-sedoheptulose 7-phosphate + D-glyceraldehyde 3-phosphate = D-erythrose 4-phosphate + beta-D-fructose 6-phosphate. It functions in the pathway carbohydrate degradation; pentose phosphate pathway; D-glyceraldehyde 3-phosphate and beta-D-fructose 6-phosphate from D-ribose 5-phosphate and D-xylulose 5-phosphate (non-oxidative stage): step 2/3. In terms of biological role, transaldolase is important for the balance of metabolites in the pentose-phosphate pathway. The sequence is that of Transaldolase from Polaromonas naphthalenivorans (strain CJ2).